The sequence spans 106 residues: Envelope small membrane protein (106 aa).

Residues 1 to 11 (MMNLLNTSLEE) are Virion surface-facing. A helical membrane pass occupies residues 12–32 (NGSFLTALYVICEFVALYLLG). Over 33–106 (RALQAFVQAA…ANFQNGKLHT (74 aa)) the chain is Intravirion.

It belongs to the gammacoronaviruses E protein family. Homooligomer. Interacts with the M membrane protein in the budding compartment of the host cell, which is located between endoplasmic reticulum and the Golgi complex. The cytoplasmic tails of both proteins are important for this function. Interacts with Nucleoprotein.

Its subcellular location is the host Golgi apparatus membrane. In terms of biological role, plays a central role in virus morphogenesis and assembly. Acts as a viroporin and self-assembles in host membranes forming pentameric protein-lipid pores that allow ion transport. Also plays a role in the induction of apoptosis. This chain is Envelope small membrane protein, found in Gallus gallus (Chicken).